Consider the following 336-residue polypeptide: Phosphatidylglycerol--prolipoprotein diacylglyceryl transferase (336 aa).

The next 3 helical transmembrane spans lie at 16–36 (IGPVTIHFYALCILLGIVLAV), 53–73 (ILDITLVAVPSGIIGARIYHI), and 93–113 (IWNGGLGIWGGVLLGALAAWA). Arginine 141 serves as a coordination point for a 1,2-diacyl-sn-glycero-3-phospho-(1'-sn-glycerol). The next 3 membrane-spanning stretches (helical) occupy residues 190-210 (PTFLYEMIWNLIGAALIVFLG), 220-240 (GSLFAIYIMWYTVGRTWIEAL), and 253-273 (INVWVSMAVFVLGVVAFIVIQ).

This sequence belongs to the Lgt family.

It localises to the cell membrane. It catalyses the reaction L-cysteinyl-[prolipoprotein] + a 1,2-diacyl-sn-glycero-3-phospho-(1'-sn-glycerol) = an S-1,2-diacyl-sn-glyceryl-L-cysteinyl-[prolipoprotein] + sn-glycerol 1-phosphate + H(+). It participates in protein modification; lipoprotein biosynthesis (diacylglyceryl transfer). Its function is as follows. Catalyzes the transfer of the diacylglyceryl group from phosphatidylglycerol to the sulfhydryl group of the N-terminal cysteine of a prolipoprotein, the first step in the formation of mature lipoproteins. This is Phosphatidylglycerol--prolipoprotein diacylglyceryl transferase from Bifidobacterium adolescentis (strain ATCC 15703 / DSM 20083 / NCTC 11814 / E194a).